Here is a 204-residue protein sequence, read N- to C-terminus: MIILDNSIQTKSKAYSISKLITINTLGPEGTSSEYAAKNFITNFTLLQGVNSKLSLHDTFESCIEKTLQSPLEYTIVPHAYDGIKHFYMRPDLQLLQIFRCDTPMYGLAVRPGFEYTDDMLDKAVIVSHPSPINLIKYFTRKDVTFDLVNSTSAAAKRVKDGLSDIALTNELARQKYGLHFVKTFKSIPMSWSLFGKGEIHDEN.

The protein belongs to the prephenate decarboxylase family.

Its subcellular location is the cytoplasm. It carries out the reaction prephenate + H(+) = 3-[(4R)-4-hydroxycyclohexa-1,5-dien-1-yl]-2-oxopropanoate + CO2. It participates in antibiotic biosynthesis; bacilysin biosynthesis. In terms of biological role, part of the bacABCDEF operon responsible for the biosynthesis of the nonribosomally synthesized dipeptide antibiotic bacilysin, composed of L-alanine and L-anticapsin. Bacilysin is an irreversible inactivator of the glutaminase domain of glucosamine synthetase. BacA is an unusual prephenate decarboxylase that avoids the typical aromatization of the cyclohexadienol ring of prephenate. BacA catalyzes the protonation of prephenate (1-carboxy-4-hydroxy-alpha-oxo-2,5-cyclohexadiene-1-propanoic acid) at C6 position, followed by a decarboxylation to produce the endocyclic-delta(4),delta(8)-7R-dihydro-hydroxyphenylpyruvate (en-H2HPP). En-H2HPP is able to undergo a slow nonenzymatic isomerization to produce the exocyclic-delta(3),delta(5)-dihydro-hydroxyphenylpyruvate (ex-H2HPP). BacA isomerizes only the pro-R double bond in prephenate. The protein is Prephenate decarboxylase of Bacillus subtilis.